Reading from the N-terminus, the 469-residue chain is Transcriptional coactivator YAP1 (469 aa).

A compositionally biased stretch (pro residues) spans 1–21 (MEPAQQPPPQPAPQGPAPPSV). A disordered region spans residues 1-47 (MEPAQQPPPQPAPQGPAPPSVSPAGTPAAPPAPPAGHQVVHVRGDSE). Residue serine 46 is modified to Phosphoserine. At threonine 48 the chain carries Phosphothreonine. A coiled-coil region spans residues 71 to 85 (MRLRKLPDSFFKPPE). Lysine 75 carries the post-translational modification N6-lactoyllysine. The segment at 76–99 (LPDSFFKPPEPKSHSRQASTDAGT) is disordered. Serine 90 and serine 94 each carry phosphoserine. Phosphothreonine is present on residues threonine 95 and threonine 104. Serine 112 bears the Phosphoserine; by LATS1 and LATS2 mark. Serine 113 and serine 116 each carry phosphoserine. Threonine 136 carries the post-translational modification Phosphothreonine; by MAPK8 and MAPK9. Serine 146 is subject to Phosphoserine; by LATS1 and LATS2. 2 WW domains span residues 153–186 (VPLP…DPRK) and 212–245 (GPLP…DPRL). The tract at residues 258–290 (SAPVKQPPPLAPQSPQGGVLGGGSSNQQQQIQL) is disordered. Serine 271 and serine 320 each carry phosphoserine. A transactivation domain region spans residues 273-469 (QGGVLGGGSS…LDKESFLTWL (197 aa)). Residues 280 to 325 (GSSNQQQQIQLQQLQMEKERLRLKQQELFRQELALRSQLPSLEQDG) are a coiled coil. At serine 333 the chain carries Phosphoserine; by MAPK8 and MAPK9. Positions 345–357 (TNSSDPFLNSGTY) are enriched in polar residues. The tract at residues 345–405 (TNSSDPFLNS…SQSTLPSQQS (61 aa)) is disordered. Phosphoserine is present on residues serine 347, serine 348, and serine 354. At serine 363 the chain carries Phosphoserine; by LATS1 and LATS2. Positions 365–375 (DSGLSMSSYSI) are enriched in polar residues. Residues serine 366 and serine 369 each carry the phosphoserine; by CK1 modification. Position 373 is a phosphotyrosine; by ABL1 (tyrosine 373). The residue at position 378 (threonine 378) is a Phosphothreonine; by MAPK8 and MAPK9. The segment covering 393 to 405 (DTISQSTLPSQQS) has biased composition (polar residues).

The protein belongs to the YAP1 family. In terms of assembly, part of a complex when phosphorylated that contains DSG3, PKP1, YAP1 and YWHAG; the complex is required for localization of DSG3 and YAP1 to the cell membrane in keratinocytes. Binds to the SH3 domain of the YES kinase. Binds to WBP1 and WBP2. Binds, in vitro, through the WW1 domain, to neural isoforms of ENAH that contain the PPSY motif. The phosphorylated form interacts with YWHAB. Interacts (via WW domains) with LATS1 (via PPxY motif 2). Interacts with LATS2. Interacts (via WW domain 1) with ERBB4 (via PPxY motif 2). Interacts with TEAD1, TEAD2, TEAD3 and TEAD4. Interacts with TP73. Interacts with RUNX1. Interacts with HCK. Interacts (via WW domains) with PTPN14 (via PPxY motif 2); this interaction leads to the cytoplasmic sequestration of YAP1 and inhibits its transcriptional coactivator activity. Interacts (when phosphorylated at Ser-112) with SMAD2, SMAD3 and WWTR1. Interacts with PRRG2 (via cytoplasmic domain). Interacts (via WW domains) with PRRG4 (via cytoplasmic domain). Interacts (phosphorylated) with CLDN18; the interaction sequesters YAP1 away from the nucleus and thereby restricts transcription of YAP1 target genes. Interacts with SMAD1. Interacts with AMOT; the interaction facilitates translocation of YAP1 to the cytoplasm and tight junctions. Interacts with AMOTL2, the interaction is required for ubiquitination of AMOTL2 and localization of YAP1 to tight junctions. Post-translationally, phosphorylated by LATS1 and LATS2; leading to cytoplasmic translocation and inactivation. Phosphorylated by ABL1; leading to YAP1 stabilization, enhanced interaction with TP73 and recruitment onto proapoptotic genes; in response to DNA damage. Phosphorylation at Ser-366 and Ser-369 by CK1 is triggered by previous phosphorylation at Ser-363 by LATS proteins and leads to YAP1 ubiquitination by SCF(beta-TRCP) E3 ubiquitin ligase and subsequent degradation. Phosphorylated at Thr-104, Thr-136, Ser-333 and Thr-378 by MAPK8/JNK1 and MAPK9/JNK2, which is required for the regulation of apoptosis by YAP1. In terms of processing, lactylation by AARS1 promotes nuclear localization and stabilization of YAP1, leading to increased Hippo signaling pathway. Delactylated by SIRT1. Ubiquitinated by SCF(beta-TRCP) E3 ubiquitin ligase. Highly specific to cortical neurons.

Its subcellular location is the cytoplasm. It localises to the nucleus. The protein resides in the cell junction. The protein localises to the tight junction. It is found in the cell membrane. Its function is as follows. Transcriptional regulator with dual roles as a coactivator and corepressor. Critical downstream regulatory target in the Hippo signaling pathway, crucial for organ size control and tumor suppression by restricting proliferation and promoting apoptosis. The Hippo signaling pathway core involves a kinase cascade featuring STK3/MST2 and STK4/MST1, along with its regulatory partner SAV1, which phosphorylates and activates LATS1/2 in complex with their regulatory protein, MOB1. This activation leads to the phosphorylation and inactivation of the YAP1 oncoprotein and WWTR1/TAZ. Phosphorylation of YAP1 by LATS1/2 prevents its nuclear translocation, thereby regulating the expression of its target genes. The transcriptional regulation of gene expression requires TEAD transcription factors and modulates cell growth, anchorage-independent growth, and induction of epithelial-mesenchymal transition (EMT). Plays a key role in tissue tension and 3D tissue shape by regulating the cortical actomyosin network, acting via ARHGAP18, a Rho GTPase activating protein that suppresses F-actin polymerization. It also suppresses ciliogenesis by acting as a transcriptional corepressor of TEAD4 target genes AURKA and PLK1. In conjunction with WWTR1, regulates TGFB1-dependent SMAD2 and SMAD3 nuclear accumulation. Synergizes with WBP2 to enhance PGR activity. In terms of biological role, attenuates p73-mediated cell death signaling in transcriptional repression-induced atypical death (TRIAD) of neurons. The polypeptide is Transcriptional coactivator YAP1 (Yap1) (Rattus norvegicus (Rat)).